The sequence spans 254 residues: Coenzyme F420:L-glutamate ligase (254 aa).

GTP is bound by residues 11–14, 40–41, and Lys45; these read IPLI and ST. Residue Asp109 participates in a divalent metal cation binding. Asn112 contributes to the GTP binding site. 3 residues coordinate a divalent metal cation: Asp150, Thr151, and Glu208. GTP is bound at residue 206-213; the sequence is MGEGAGGI.

It belongs to the CofE family. Homodimer. Requires Mg(2+) as cofactor. It depends on Mn(2+) as a cofactor. K(+) serves as cofactor.

It catalyses the reaction oxidized coenzyme F420-0 + GTP + L-glutamate = oxidized coenzyme F420-1 + GDP + phosphate + H(+). The catalysed reaction is oxidized coenzyme F420-1 + GTP + L-glutamate = oxidized coenzyme F420-2 + GDP + phosphate + H(+). It participates in cofactor biosynthesis; coenzyme F420 biosynthesis. Catalyzes the GTP-dependent successive addition of two or more gamma-linked L-glutamates to the L-lactyl phosphodiester of 7,8-didemethyl-8-hydroxy-5-deazariboflavin (F420-0) to form coenzyme F420-0-glutamyl-glutamate (F420-2) or polyglutamated F420 derivatives. The polypeptide is Coenzyme F420:L-glutamate ligase (Methanosarcina acetivorans (strain ATCC 35395 / DSM 2834 / JCM 12185 / C2A)).